Reading from the N-terminus, the 330-residue chain is MPTDNAIDVDLLVIGAGPTGLFATYYAGFRGFRVAVVDSLPELGGQITAMYPEKQILDVAGFPSVKGRDLVEGLVAQAATADPTYLLDRTATTLHEDDDAENGAVVVGLDDGTEVRAKAVLITAGIGKFSPRPLPAGDGWLGRGLEFFVPSFAPYAGKDVVIVGGGDSAFDWALHLEPVARSVTLVHRRDGFRAHQRTVEAVQASSVQIVTRAEVSAIRGNGVVESIEITVDGESTERPAQAIVAALGFVADLGPLQQWGLDVEKRHLVVDSSMRTNLARVFAAGDITEYPGKVRLIAVGFGEAATAVNNAAVVIDPSAHVFPGHSSEGS.

FAD is bound by residues T19, D38, Q46, Y51, A91, F129, D286, and S327.

It belongs to the ferredoxin--NADP reductase type 2 family. As to quaternary structure, homodimer. Requires FAD as cofactor.

It carries out the reaction 2 reduced [2Fe-2S]-[ferredoxin] + NADP(+) + H(+) = 2 oxidized [2Fe-2S]-[ferredoxin] + NADPH. The protein is Ferredoxin--NADP reductase of Nocardioides sp. (strain ATCC BAA-499 / JS614).